The primary structure comprises 703 residues: Polyribonucleotide nucleotidyltransferase (703 aa).

The Mg(2+) site is built by Asp-488 and Asp-494. Residues 555 to 614 form the KH domain; that stretch reads PRLYVMKINPEKIRDVIGKGGAVIRALTEETGTQINIEEDGTITIASNDSAKADEAKRRI. Residues 624 to 692 enclose the S1 motif domain; it reads GKVYEGAITK…EKGRVKLSMK (69 aa).

The protein belongs to the polyribonucleotide nucleotidyltransferase family. Requires Mg(2+) as cofactor.

Its subcellular location is the cytoplasm. The enzyme catalyses RNA(n+1) + phosphate = RNA(n) + a ribonucleoside 5'-diphosphate. Functionally, involved in mRNA degradation. Catalyzes the phosphorolysis of single-stranded polyribonucleotides processively in the 3'- to 5'-direction. This Polaromonas naphthalenivorans (strain CJ2) protein is Polyribonucleotide nucleotidyltransferase.